The following is a 776-amino-acid chain: Cullin-1 (776 aa).

Residue arginine 63 is modified to Omega-N-methylarginine. The Cullin neddylation domain maps to 706–766 (DRKLLIQAAI…IEKEYLERVD (61 aa)). Residue lysine 720 forms a Glycyl lysine isopeptide (Lys-Gly) (interchain with G-Cter in NEDD8) linkage.

Belongs to the cullin family. As to quaternary structure, component of multiple Cul1-RING E3 ubiquitin-protein ligase complexes commonly known as SCF (SKP1-CUL1-F-box) complexes, consisting of CUL1, SKP1, RBX1 and a variable F-box domain-containing protein as substrate-specific subunit. Component of the SCF(FBXW11) complex containing FBXW11. Component of the SCF(SKP2) complex containing SKP2, in which it interacts directly with SKP1, SKP2 and RBX1. Component of the SCF(FBXW2) complex containing FBXW2. Component of the SCF(FBXO32) complex containing FBXO32. Component of the probable SCF(FBXO7) complex containing FBXO7. Component of the SCF(FBXO10) complex containing FBXO10. Component of the SCF(FBXO11) complex containing FBXO11. Component of the SCF(FBXO25) complex containing FBXO25. Component of the SCF(FBXO33) complex containing FBXO33. Component of the probable SCF(FBXO4) complex containing FBXO4. Component of the SCF(FBXO44) complex, composed of SKP1, CUL1 and FBXO44. Component of the SCF(BTRC) complex, composed of SKP1, CUL1 and BTRC. This complex binds phosphorylated NFKBIA. Part of a SCF complex consisting of CUL1, RBX1, SKP1 and FBXO2. Component of a SCF(SKP2)-like complex containing CUL1, SKP1, TRIM21 and SKP2. Component of the SCF(FBXO17) complex, composed of SKP1, CUL1 and FBXO17. Component of the SCF(FBXO27) complex, composed of SKP1, CUL1 and FBXO27. Component of the SCF(CCNF) complex consisting of CUL1, RBX1, SKP1 and CCNF. Interacts with CCNF. Component of the SCF(FBXL3) complex composed of CUL1, SKP1, RBX1 and FBXL3. Component of the SCF(FBXL21) complex composed of CUL1, SKP1, RBX1 and FBXL21. Component of the SCF(FBXO9) composed of CUL1, SKP1, RBX1 and FBXO9. Component of the SCF(FBXW7) composed of CUL1, SKP1, RBX1 and FBXW7. Component of the SCF(FBXO31) complex composed of CUL1, SKP1, RBX1 and FBXO31. Interacts with CHEK2; mediates CHEK2 ubiquitination and regulates its function. Part of a complex with TIP120A/CAND1 and RBX1. The unneddylated form interacts with TIP120A/CAND1 and the interaction mediates the exchange of the F-box substrate-specific subunit. Can self-associate. Interacts with FBXW8. Interacts with RNF7. Interacts with TRIM21. Interacts with COPS2. Interacts with UBE2M. Identified in a complex with RBX1 and GLMN. Interacts with CEP68 as part of the SCF(FBXW11) complex; the interaction is probably mediated by FBXW11 and the complex also contains CDK5RAP2 and PCNT. Interacts (when neddylated) with ARIH1; leading to activate the E3 ligase activity of ARIH1. Interacts with COPS9 isoform 2. Interacts with UBXN1. Interacts with KAT7, probably as part of an SCF complex; the interaction mediates KAT7 ubiquitination. Interacts with NOTCH2. Part of a complex that contains DCUN1D5, CUL1 and RBX1; this complex is bridged by CUL1. Interacts (unneddylated form) with DCUN1D1, DCUN1D2, DCUN1D3, DCUN1D4 and DCUN1D5; these interactions promote the cullin neddylation. Interacts (via the C-terminal domain) with CUL7; the interaction seems to be mediated by FBXW8; it is likely specific to FBXW8, but not other F-box proteins. Interacts with UBR2, as part of SCF(BTRC) complex; the interaction mediates 'Lys-48'-linked ubiquitination of UBR2 and is regulated by DUSP22 in the T-cell receptor signaling pathway. (Microbial infection) Interacts with Epstein-Barr virus BPLF1. In terms of assembly, (Microbial infection) Interacts with Human adenovirus early E1A protein; this interaction inhibits RBX1-CUL1-dependent elongation reaction of ubiquitin chains by the SCF(FBXW7) complex. As to quaternary structure, (Microbial infection) Interacts with vaccinia virus protein C9L. (Microbial infection) Interacts with Epstein-Barr virus (EBV) tegument protein BGLF2; this interaction might facilitate CUL1 recruitment to STAT2, leading to ubiquitination and degradation of the latter. Neddylated; which enhances the ubiquitination activity of SCF. Neddylation prevents binding of the inhibitor CAND1. Neddylation leads to structural rearrangment in the complex that allows interaction between the E2 ubiquitin-conjugating enzyme and the acceptor ubiquitin. Deneddylated via its interaction with the COP9 signalosome (CSN) complex. Post-translationally, (Microbial infection) Deneddylated by Epstein-Barr virus BPLF1 leading to a S-phase-like environment that is required for efficient replication of the viral genome. As to expression, expressed in lung fibroblasts.

Its pathway is protein modification; protein ubiquitination. In terms of biological role, core component of multiple cullin-RING-based SCF (SKP1-CUL1-F-box protein) E3 ubiquitin-protein ligase complexes, which mediate the ubiquitination of proteins involved in cell cycle progression, signal transduction and transcription. SCF complexes and ARIH1 collaborate in tandem to mediate ubiquitination of target proteins. In the SCF complex, serves as a rigid scaffold that organizes the SKP1-F-box protein and RBX1 subunits. May contribute to catalysis through positioning of the substrate and the ubiquitin-conjugating enzyme. The E3 ubiquitin-protein ligase activity of the complex is dependent on the neddylation of the cullin subunit and exchange of the substrate recognition component is mediated by TIP120A/CAND1. The functional specificity of the SCF complex depends on the F-box protein as substrate recognition component. SCF(BTRC) and SCF(FBXW11) direct ubiquitination of CTNNB1 and participate in Wnt signaling. SCF(FBXW11) directs ubiquitination of phosphorylated NFKBIA. SCF(BTRC) directs ubiquitination of NFKBIB, NFKBIE, ATF4, SMAD3, SMAD4, CDC25A, FBXO5 and probably NFKB2. SCF(BTRC) and/or SCF(FBXW11) direct ubiquitination of CEP68. SCF(SKP2) directs ubiquitination of phosphorylated CDKN1B/p27kip and is involved in regulation of G1/S transition. SCF(SKP2) directs ubiquitination of ORC1, CDT1, RBL2, ELF4, CDKN1A, RAG2, FOXO1A, and probably MYC and TAL1. SCF(FBXW7) directs ubiquitination of CCNE1, NOTCH1 released notch intracellular domain (NICD), and probably PSEN1. SCF(FBXW2) directs ubiquitination of GCM1. SCF(FBXO32) directs ubiquitination of MYOD1. SCF(FBXO7) directs ubiquitination of BIRC2 and DLGAP5. SCF(FBXO33) directs ubiquitination of YBX1. SCF(FBXO1) directs ubiquitination of BCL6 and DTL but does not seem to direct ubiquitination of TP53. SCF(BTRC) mediates the ubiquitination of NFKBIA at 'Lys-21' and 'Lys-22'; the degradation frees the associated NFKB1-RELA dimer to translocate into the nucleus and to activate transcription. SCF(CCNF) directs ubiquitination of CCP110. SCF(FBXL3) and SCF(FBXL21) direct ubiquitination of CRY1 and CRY2. SCF(FBXO9) directs ubiquitination of TTI1 and TELO2. SCF(FBXO10) directs ubiquitination of BCL2. Neddylated CUL1-RBX1 ubiquitinates p53/TP53 recruited by Cul7-RING(FBXW8) complex. SCF(BTRC) directs 'Lys-48'-linked ubiquitination of UBR2 in the T-cell receptor signaling pathway. The SCF(FBXO31) protein ligase complex specifically mediates the ubiquitination of proteins amidated at their C-terminus in response to oxidative stress. The polypeptide is Cullin-1 (CUL1) (Homo sapiens (Human)).